Consider the following 474-residue polypeptide: tRNA modification GTPase MnmE (474 aa).

Residues Arg-25, Glu-82, and Lys-123 each contribute to the (6S)-5-formyl-5,6,7,8-tetrahydrofolate site. The 168-residue stretch at 219–386 (GIKVVIAGKP…LKKHLYDSAM (168 aa)) folds into the TrmE-type G domain. Residue Asn-229 participates in K(+) binding. GTP is bound by residues 229-234 (NAGKSS), 248-254 (SNISGTT), and 273-276 (DTAG). Residue Ser-233 participates in Mg(2+) binding. Residues Ser-248, Ile-250, and Thr-253 each coordinate K(+). Thr-254 contacts Mg(2+). Lys-474 is a binding site for (6S)-5-formyl-5,6,7,8-tetrahydrofolate.

The protein belongs to the TRAFAC class TrmE-Era-EngA-EngB-Septin-like GTPase superfamily. TrmE GTPase family. Homodimer. Heterotetramer of two MnmE and two MnmG subunits. K(+) serves as cofactor.

The protein localises to the cytoplasm. Exhibits a very high intrinsic GTPase hydrolysis rate. Involved in the addition of a carboxymethylaminomethyl (cmnm) group at the wobble position (U34) of certain tRNAs, forming tRNA-cmnm(5)s(2)U34. This is tRNA modification GTPase MnmE from Blochmanniella floridana.